Consider the following 530-residue polypeptide: Nectin-2 (530 aa).

Positions M1–A31 are cleaved as a signal peptide. An Ig-like V-type domain is found at Q32–L147. Over Q32–G351 the chain is Extracellular. C54 and C131 are oxidised to a cystine. N128 and N138 each carry an N-linked (GlcNAc...) asparagine glycan. Ig-like C2-type domains lie at P153–S247 and P252–V337. Disulfide bonds link C174–C229 and C274–C320. The N-linked (GlcNAc...) asparagine glycan is linked to N315. Residues I352–I372 traverse the membrane as a helical segment. Residues C373–V530 are Cytoplasmic-facing. Positions L382–E407 are disordered. Residue T401 is modified to Phosphothreonine. The residue at position 424 (S424) is a Phosphoserine.

It belongs to the nectin family. As to quaternary structure, can form trans-heterodimers with NECTIN3. Interacts with CD226 or with PVRIG; these interactions are competitive and have a differential functional outcome on T-cell activation, either positive or negative, respectively. Binds with low affinity to TIGIT. As to expression, brain, spinal cord, spleen, kidney, heart and liver.

It is found in the cell membrane. Functionally, modulator of T-cell signaling. Can be either a costimulator of T-cell function, or a coinhibitor, depending on the receptor it binds to. Upon binding to CD226, stimulates T-cell proliferation and cytokine production, including that of IL2, IL5, IL10, IL13, and IFNG. Upon interaction with PVRIG, inhibits T-cell proliferation. These interactions are competitive. Probable cell adhesion protein. The chain is Nectin-2 from Mus musculus (Mouse).